The following is a 388-amino-acid chain: Succinate--CoA ligase [ADP-forming] subunit beta (388 aa).

The ATP-grasp domain maps to 9–244 (KEILRKFGVA…LDEEDPAEIE (236 aa)). Residues lysine 46, 53 to 55 (GRG), glutamate 99, alanine 102, and glutamate 107 each bind ATP. 2 residues coordinate Mg(2+): asparagine 199 and aspartate 213. Substrate contacts are provided by residues asparagine 264 and 321–323 (GIM).

Belongs to the succinate/malate CoA ligase beta subunit family. In terms of assembly, heterotetramer of two alpha and two beta subunits. Requires Mg(2+) as cofactor.

It catalyses the reaction succinate + ATP + CoA = succinyl-CoA + ADP + phosphate. It carries out the reaction GTP + succinate + CoA = succinyl-CoA + GDP + phosphate. It participates in carbohydrate metabolism; tricarboxylic acid cycle; succinate from succinyl-CoA (ligase route): step 1/1. Functionally, succinyl-CoA synthetase functions in the citric acid cycle (TCA), coupling the hydrolysis of succinyl-CoA to the synthesis of either ATP or GTP and thus represents the only step of substrate-level phosphorylation in the TCA. The beta subunit provides nucleotide specificity of the enzyme and binds the substrate succinate, while the binding sites for coenzyme A and phosphate are found in the alpha subunit. The chain is Succinate--CoA ligase [ADP-forming] subunit beta from Burkholderia vietnamiensis (strain G4 / LMG 22486) (Burkholderia cepacia (strain R1808)).